The sequence spans 905 residues: Autophagy-related protein 23 (905 aa).

Residues 18 to 200 (KLSPIKIPPS…KRSIEDDSVI (183 aa)) are disordered. The span at 99–113 (SLKKSKTKLDARLYE) shows a compositional bias: basic and acidic residues. A compositionally biased stretch (polar residues) spans 119 to 174 (RHGSPSNKENMHNSGKSTQASQLSSDVNSSISHKSPFESSPSKIDTPIKQINSSFA). Over residues 178–187 (KSSPPKSSPS) the composition is skewed to low complexity. Coiled-coil stretches lie at residues 400–810 (QDDH…KTNA) and 844–882 (NLHFEKKSQARDIDSLQKKLEIVNMEKNQLLRLIDEYQS). The interval 879-905 (EYQSGSDHNPKKKLSPKKSGIKKPSRY) is disordered. Basic residues predominate over residues 888-905 (PKKKLSPKKSGIKKPSRY).

Belongs to the ATG23 family.

The protein localises to the cytoplasm. It localises to the membrane. Required for cytoplasm to vacuole transport (Cvt) vesicle formation and efficient autophagy. Plays a role in ATG protein retrieval from the pre-autophagosomal structure (PAS) and is especially required for autophagy-dependent cycling of ATG9. Also plays a role in regulation of filamentous growth. This Debaryomyces hansenii (strain ATCC 36239 / CBS 767 / BCRC 21394 / JCM 1990 / NBRC 0083 / IGC 2968) (Yeast) protein is Autophagy-related protein 23 (ATG23).